We begin with the raw amino-acid sequence, 96 residues long: Growth-regulated alpha protein (96 aa).

The N-terminal stretch at 1–24 (MVSATRSLLCAALPVLATSRQATG) is a signal peptide. 2 cysteine pairs are disulfide-bonded: cysteine 33–cysteine 59 and cysteine 35–cysteine 75.

It belongs to the intercrine alpha (chemokine CxC) family. In terms of assembly, monomer and homodimer. In terms of tissue distribution, at least expressed in the lung and trachea.

The protein localises to the secreted. Its function is as follows. Has chemotactic activity for neutrophils. Contributes to neutrophil activation during inflammation. This Rattus norvegicus (Rat) protein is Growth-regulated alpha protein (Cxcl1).